Consider the following 395-residue polypeptide: S-adenosylmethionine synthase 2 (395 aa).

A Mg(2+)-binding site is contributed by E9. H15 contributes to the ATP binding site. Residue E43 coordinates K(+). Residues E56 and Q99 each contribute to the L-methionine site. ATP is bound by residues 167-169 (DGK), 235-238 (SGRF), D246, 252-253 (RK), A269, K273, and K277. D246 is a binding site for L-methionine. K277 contributes to the L-methionine binding site.

It belongs to the AdoMet synthase family. Homotetramer. Requires Mn(2+) as cofactor. The cofactor is Mg(2+). Co(2+) is required as a cofactor. It depends on K(+) as a cofactor.

It localises to the cytoplasm. The catalysed reaction is L-methionine + ATP + H2O = S-adenosyl-L-methionine + phosphate + diphosphate. It functions in the pathway amino-acid biosynthesis; S-adenosyl-L-methionine biosynthesis; S-adenosyl-L-methionine from L-methionine: step 1/1. Catalyzes the formation of S-adenosylmethionine from methionine and ATP. The reaction comprises two steps that are both catalyzed by the same enzyme: formation of S-adenosylmethionine (AdoMet) and triphosphate, and subsequent hydrolysis of the triphosphate. In Suaeda salsa (Seepweed), this protein is S-adenosylmethionine synthase 2 (METK2).